The primary structure comprises 766 residues: Isocitrate lyase 2 (766 aa).

106-108 contacts substrate; the sequence is GGW. Residue D177 participates in Mg(2+) binding. Residue C215 is the Proton acceptor of the active site. Substrate is bound by residues 216 to 217, R252, 487 to 491, and T522; these read GH and NLSPS.

Belongs to the isocitrate lyase/PEP mutase superfamily. Isocitrate lyase family. The cofactor is Mg(2+).

The enzyme catalyses D-threo-isocitrate = glyoxylate + succinate. It participates in carbohydrate metabolism; glyoxylate cycle; (S)-malate from isocitrate: step 1/2. Functionally, involved in the persistence and virulence of Mycobacterium. Catalyzes the reversible formation of succinate and glyoxylate from isocitrate, a key step of the glyoxylate cycle, which operates as an anaplerotic route for replenishing the tricarboxylic acid cycle during growth on fatty acid substrates. This is Isocitrate lyase 2 (aceA) from Mycobacterium bovis (strain ATCC BAA-935 / AF2122/97).